We begin with the raw amino-acid sequence, 3065 residues long: MAX gene-associated protein (3065 aa).

Residues Lys-4 and Lys-178 each participate in a glycyl lysine isopeptide (Lys-Gly) (interchain with G-Cter in SUMO2) cross-link. The T-box DNA-binding region spans 84-260; sequence MWNEFYHRST…YNPFAKGFRD (177 aa). Residues 259 to 277 are compositionally biased toward basic and acidic residues; that stretch reads RDDGLNNKPQRDGKQKNSS. The disordered stretch occupies residues 259 to 322; sequence RDDGLNNKPQ…GHETSGKGLE (64 aa). Residues 278 to 289 show a composition bias toward polar residues; that stretch reads DQEGNNISSSSG. A compositionally biased stretch (basic and acidic residues) spans 309 to 322; the sequence is PLSRGHETSGKGLE. Residues Lys-323, Lys-329, Lys-349, Lys-432, Lys-460, Lys-465, and Lys-482 each participate in a glycyl lysine isopeptide (Lys-Gly) (interchain with G-Cter in SUMO2) cross-link. Ser-534 carries the phosphoserine modification. Lys-570 is covalently cross-linked (Glycyl lysine isopeptide (Lys-Gly) (interchain with G-Cter in SUMO2)). Residues 604–653 form a disordered region; sequence QNASPNVPGKRGRPRKLKLCKAGRPPKNTGKSLISTKNTPVSPGSTFPDV. Ser-607 bears the Phosphoserine mark. Lys-613 is covalently cross-linked (Glycyl lysine isopeptide (Lys-Gly) (interchain with G-Cter in SUMO2)). Residues 613 to 624 are compositionally biased toward basic residues; that stretch reads KRGRPRKLKLCK. The span at 632–648 shows a compositional bias: polar residues; sequence TGKSLISTKNTPVSPGS. A Phosphoserine modification is found at Ser-645. Glycyl lysine isopeptide (Lys-Gly) (interchain with G-Cter in SUMO2) cross-links involve residues Lys-654, Lys-785, Lys-791, Lys-817, and Lys-826. Ser-851 bears the Phosphoserine mark. Residues 881–911 are disordered; sequence STSYSLKPHSVPPVSRKAKSQNRQATFSGRT. Over residues 901–911 the composition is skewed to polar residues; it reads QNRQATFSGRT. Ser-924 carries the post-translational modification Phosphoserine. Lys-928 participates in a covalent cross-link: Glycyl lysine isopeptide (Lys-Gly) (interchain with G-Cter in SUMO2). Residues 971–990 are disordered; the sequence is RQAQQQQQQQQGSRPPGLSK. Positions 972 to 981 are enriched in low complexity; it reads QAQQQQQQQQ. Glycyl lysine isopeptide (Lys-Gly) (interchain with G-Cter in SUMO2) cross-links involve residues Lys-990, Lys-1091, Lys-1140, Lys-1162, Lys-1199, and Lys-1207. A coiled-coil region spans residues 1111–1147; sequence YDTLGEEAREEEEGIREEEEQLKEKKKRKKLEYTICE. Residue Ser-1208 is modified to Phosphoserine. Disordered stretches follow at residues 1246–1332 and 1380–1429; these read RKKE…PGGP and RKSR…MEDI. Low complexity-rich tracts occupy residues 1253–1269 and 1310–1322; these read QPSSSSSPSPSFQQQTS and KSSCNEGESSSTS. Phosphoserine occurs at positions 1430 and 1457. Residues Lys-1461 and Lys-1502 each participate in a glycyl lysine isopeptide (Lys-Gly) (interchain with G-Cter in SUMO2) cross-link. Disordered regions lie at residues 1488–1517, 1905–1927, and 1967–2029; these read SRKPRTLLPSTSNSKMASSSGTATNRPGKN, SPPEPQSFASKTGSETKITYSSG, and QMKR…EDRG. 2 stretches are compositionally biased toward polar residues: residues 1495–1514 and 1911–1927; these read LPSTSNSKMASSSGTATNRP and SFASKTGSETKITYSSG. Residues 1968-1994 show a composition bias toward basic and acidic residues; it reads MKRESQNPDQKDETNSIKREQETKKVL. Residues Lys-1985 and Lys-1992 each participate in a glycyl lysine isopeptide (Lys-Gly) (interchain with G-Cter in SUMO2) cross-link. A compositionally biased stretch (polar residues) spans 2008-2023; the sequence is IKQNSGAATSEETLND. Glycyl lysine isopeptide (Lys-Gly) (interchain with G-Cter in SUMO2) cross-links involve residues Lys-2103, Lys-2113, Lys-2135, Lys-2139, Lys-2146, Lys-2159, Lys-2194, Lys-2206, and Lys-2238. Residues 2258-2316 are disordered; it reads RRAAKSSRGNGHFQGHLLLPGEQIQPKQEKKGGRSSADFTVLDLEEDDEDDNEKTDDSI. Arg-2265 carries the omega-N-methylarginine modification. Lys-2284 is covalently cross-linked (Glycyl lysine isopeptide (Lys-Gly) (interchain with G-Cter in SUMO2)). Residues 2300-2316 are compositionally biased toward acidic residues; the sequence is DLEEDDEDDNEKTDDSI. Glycyl lysine isopeptide (Lys-Gly) (interchain with G-Cter in SUMO2) cross-links involve residues Lys-2378, Lys-2413, Lys-2457, and Lys-2532. A bHLH domain is found at 2423-2474; it reads YYRRTHTANERRRRGEMRDLFEKLKITLGLLHSSKVSKSLILTRAFSEIQGL. Ser-2541 is subject to Phosphoserine. Residue Lys-2546 forms a Glycyl lysine isopeptide (Lys-Gly) (interchain with G-Cter in SUMO2) linkage. Residues 2576-2595 form a disordered region; it reads KKDQATENTSPLNTPHTSAN. Polar residues predominate over residues 2581–2595; that stretch reads TENTSPLNTPHTSAN. Residues Lys-2629, Lys-2679, Lys-2698, and Lys-2784 each participate in a glycyl lysine isopeptide (Lys-Gly) (interchain with G-Cter in SUMO2) cross-link. The segment at 2668-2709 is disordered; sequence GSKYPHEVPDSKPSDHLKDTVRNEDNSLEDKGRISSRGNRDG. Positions 2671–2709 are enriched in basic and acidic residues; that stretch reads YPHEVPDSKPSDHLKDTVRNEDNSLEDKGRISSRGNRDG. The stretch at 2817–2841 forms a coiled coil; that stretch reads DDTDETLTSLLNEIAFLNQQLNDDS. A phosphoserine mark is found at Ser-2910 and Ser-2921. The segment at 2944 to 2968 is disordered; sequence AIDGGKNTSGLPAEPESVSSPPTLH. Ser-2978 carries the phosphoserine modification. A Glycyl lysine isopeptide (Lys-Gly) (interchain with G-Cter in SUMO2) cross-link involves residue Lys-3041.

As to quaternary structure, interacts with MAX. Requires dimerization with MAX for E-box binding. Component of some MLL1/MLL complex, at least composed of the core components KMT2A/MLL1, ASH2L, HCFC1/HCF1, WDR5 and RBBP5, as well as the facultative components BACC1, CHD8, E2F6, HSP70, INO80C, KANSL1, LAS1L, MAX, MCRS1, MGA, MYST1/MOF, PELP1, PHF20, PRP31, RING2, RUVB1/TIP49A, RUVB2/TIP49B, SENP3, TAF1, TAF4, TAF6, TAF7, TAF9 and TEX10. Interacts with ZMYND11. Highly expressed in germ cells and granulosa cells.

Its subcellular location is the nucleus. Functionally, functions as a dual-specificity transcription factor, regulating the expression of both MAX-network and T-box family target genes. Functions as a repressor or an activator. Binds to 5'-AATTTCACACCTAGGTGTGAAATT-3' core sequence and seems to regulate MYC-MAX target genes. Suppresses transcriptional activation by MYC and inhibits MYC-dependent cell transformation. Function activated by heterodimerization with MAX. This heterodimerization serves the dual function of both generating an E-box-binding heterodimer and simultaneously blocking interaction of a corepressor. The chain is MAX gene-associated protein from Homo sapiens (Human).